We begin with the raw amino-acid sequence, 228 residues long: Cytochrome c oxidase subunit 2 (228 aa).

Residues 1-26 (MSTWANLGLQDSASPLMEQLIFFHDH) are Mitochondrial intermembrane-facing. A helical transmembrane segment spans residues 27 to 48 (ALLILVMITVLVGYLMFMLFFN). Over 49 to 62 (NYVNRFLLHGQLIE) the chain is Mitochondrial matrix. A helical transmembrane segment spans residues 63–82 (MIWTILPAIILLFIALPSLR). Residues 83 to 228 (LLYLLDEINE…FIKWISSNNS (146 aa)) lie on the Mitochondrial intermembrane side of the membrane. Cu cation is bound by residues His161, Cys196, Glu198, Cys200, His204, and Met207. Glu198 is a binding site for Mg(2+).

Belongs to the cytochrome c oxidase subunit 2 family. In terms of assembly, component of the cytochrome c oxidase (complex IV, CIV), a multisubunit enzyme composed of a catalytic core of 3 subunits and several supernumerary subunits. The complex exists as a monomer or a dimer and forms supercomplexes (SCs) in the inner mitochondrial membrane with ubiquinol-cytochrome c oxidoreductase (cytochrome b-c1 complex, complex III, CIII). It depends on Cu cation as a cofactor.

Its subcellular location is the mitochondrion inner membrane. The catalysed reaction is 4 Fe(II)-[cytochrome c] + O2 + 8 H(+)(in) = 4 Fe(III)-[cytochrome c] + 2 H2O + 4 H(+)(out). Functionally, component of the cytochrome c oxidase, the last enzyme in the mitochondrial electron transport chain which drives oxidative phosphorylation. The respiratory chain contains 3 multisubunit complexes succinate dehydrogenase (complex II, CII), ubiquinol-cytochrome c oxidoreductase (cytochrome b-c1 complex, complex III, CIII) and cytochrome c oxidase (complex IV, CIV), that cooperate to transfer electrons derived from NADH and succinate to molecular oxygen, creating an electrochemical gradient over the inner membrane that drives transmembrane transport and the ATP synthase. Cytochrome c oxidase is the component of the respiratory chain that catalyzes the reduction of oxygen to water. Electrons originating from reduced cytochrome c in the intermembrane space (IMS) are transferred via the dinuclear copper A center (CU(A)) of subunit 2 and heme A of subunit 1 to the active site in subunit 1, a binuclear center (BNC) formed by heme A3 and copper B (CU(B)). The BNC reduces molecular oxygen to 2 water molecules using 4 electrons from cytochrome c in the IMS and 4 protons from the mitochondrial matrix. The chain is Cytochrome c oxidase subunit 2 (mt:CoII) from Drosophila melanogaster (Fruit fly).